Reading from the N-terminus, the 355-residue chain is Ubiquinone biosynthesis protein COQ4 homolog, mitochondrial (355 aa).

Zn(2+)-binding residues include His134, Asp135, His138, and Glu150.

This sequence belongs to the COQ4 family. Component of a multi-subunit COQ enzyme complex. The cofactor is Zn(2+).

It is found in the mitochondrion inner membrane. The catalysed reaction is a 4-hydroxy-3-methoxy-5-(all-trans-polyprenyl)benzoate + H(+) = a 2-methoxy-6-(all-trans-polyprenyl)phenol + CO2. Its pathway is cofactor biosynthesis; ubiquinone biosynthesis. Functionally, lyase that catalyzes the C1-decarboxylation of 4-hydroxy-3-methoxy-5-(all-trans-polyprenyl)benzoic acid into 2-methoxy-6-(all-trans-polyprenyl)phenol during ubiquinone biosynthesis. This is Ubiquinone biosynthesis protein COQ4 homolog, mitochondrial from Plasmodium knowlesi (strain H).